The primary structure comprises 111 residues: MIPGEYRLREEPIVCNRQKSATKLTVVNRGDRPVQVGSHFHFFEVNSFLEFDRQAAYGKHLNIPAGTAVRFEPGDAKQVELVPFSGERRVYGLNNMVNGPLDGNGKGGVRE.

It belongs to the urease beta subunit family. Heterotrimer of UreA (gamma), UreB (beta) and UreC (alpha) subunits. Three heterotrimers associate to form the active enzyme.

The protein resides in the cytoplasm. It catalyses the reaction urea + 2 H2O + H(+) = hydrogencarbonate + 2 NH4(+). The protein operates within nitrogen metabolism; urea degradation; CO(2) and NH(3) from urea (urease route): step 1/1. The chain is Urease subunit beta from Geobacillus kaustophilus (strain HTA426).